Here is a 471-residue protein sequence, read N- to C-terminus: Mitochondrial distribution and morphology protein 10 (471 aa).

3 disordered regions span residues 272–291, 374–394, and 436–455; these read TEMPSSSSSTSSTTTTSNHG, ADTPGVPPVEPPSTHNRDEEN, and SWAANSTAAGGGQSVGGGVS. Positions 276 to 288 are enriched in low complexity; it reads SSSSSTSSTTTTS. A compositionally biased stretch (gly residues) spans 444 to 455; sequence AGGGQSVGGGVS.

Belongs to the MDM10 family. Component of the ER-mitochondria encounter structure (ERMES) or MDM complex, composed of mmm1, mdm10, mdm12 and mdm34. Associates with the mitochondrial outer membrane sorting assembly machinery SAM(core) complex.

It localises to the mitochondrion outer membrane. Component of the ERMES/MDM complex, which serves as a molecular tether to connect the endoplasmic reticulum and mitochondria. Components of this complex are involved in the control of mitochondrial shape and protein biogenesis and may function in phospholipid exchange. mdm10 is involved in the late assembly steps of the general translocase of the mitochondrial outer membrane (TOM complex). Functions in the tom40-specific route of the assembly of outer membrane beta-barrel proteins, including the association of tom40 with the receptor tom22 and small TOM proteins. Can associate with the SAM(core) complex as well as the mdm12-mmm1 complex, both involved in late steps of the major beta-barrel assembly pathway, that is responsible for biogenesis of all outer membrane beta-barrel proteins. May act as a switch that shuttles between both complexes and channels precursor proteins into the tom40-specific pathway. Plays a role in mitochondrial morphology and in the inheritance of mitochondria. The protein is Mitochondrial distribution and morphology protein 10 (mdmB) of Neosartorya fischeri (strain ATCC 1020 / DSM 3700 / CBS 544.65 / FGSC A1164 / JCM 1740 / NRRL 181 / WB 181) (Aspergillus fischerianus).